The following is an 82-amino-acid chain: Antimicrobial peptide Smp43 (82 aa).

The N-terminal stretch at 1–22 (MNRKLLLVTLMVTMLVMQPAEA) is a signal peptide. Residues 66 to 82 (EAGQMPFDEFMDILYES) constitute a propeptide that is removed on maturation.

Belongs to the non-disulfide-bridged peptide (NDBP) superfamily. Long chain multifunctional peptide (group 2) family. Expressed by the venom gland.

It is found in the secreted. Its subcellular location is the target cell membrane. Its function is as follows. Antimicrobial peptide with moderate activity against Gram-positive bacteria and Gram-negative bacteria, as well as low activity against fungi. Acts by inducing bacterial membrane disruption. Shows activity against B.subtilis (MIC=4 ug/ml), S.epidermidis (MIC=64 ug/ml), S.aureus (MIC=32 ug/ml), E.coli (MIC=128 ug/ml), K.pneumoniae (MIC=64 ug/ml), P.aeruginosa (MIC=64 ug/ml), and C.albicans (MIC=128 ug/ml). Does not show hemolysis activity. This is Antimicrobial peptide Smp43 from Scorpio palmatus (Israeli golden scorpion).